Reading from the N-terminus, the 230-residue chain is Large ribosomal subunit protein uL1 (230 aa).

This sequence belongs to the universal ribosomal protein uL1 family. Part of the 50S ribosomal subunit.

Binds directly to 23S rRNA. The L1 stalk is quite mobile in the ribosome, and is involved in E site tRNA release. In terms of biological role, protein L1 is also a translational repressor protein, it controls the translation of the L11 operon by binding to its mRNA. The sequence is that of Large ribosomal subunit protein uL1 from Leptospira borgpetersenii serovar Hardjo-bovis (strain JB197).